A 370-amino-acid chain; its full sequence is Allatostatins (370 aa).

Residues 1 to 27 (MSGPRTCFCLPSALVLVLLSLSTSALG) form the signal peptide. Positions 28–65 (TAPEPSGVHEESPAGGGTDLLPHPEDLSASDNPDLEFV) are excised as a propeptide. Residues 29–58 (APEPSGVHEESPAGGGTDLLPHPEDLSASD) form a disordered region. Leucine amide is present on residues Leu-73, Leu-94, Leu-105, and Leu-117. The propeptide occupies 121–151 (DYDYYGEEDEDDQQAIGDEDIEESDVGDLMD). Leucine amide occurs at positions 161, 172, 188, 200, 213, and 232. Positions 236 to 251 (SDDIDFRELEEKFAED) are excised as a propeptide. Leu-264 is modified (leucine amide). The propeptide occupies 268–345 (EVEPSELEAV…ITPEEFSRMV (78 aa)). Residues 273–298 (ELEAVRNEEKDNSSVHDKKNNTNDMH) form a disordered region. Leu-353 is subject to Leucine amide. Ile-364 carries the post-translational modification Isoleucine amide. The propeptide occupies 368–370 (SER).

Belongs to the allatostatin family. As to expression, brain, subesophageal ganglion and corpus allatum.

Its subcellular location is the secreted. Neuropeptide inhibitors of juvenile hormone synthesis and gut muscle contraction. This is Allatostatins from Diploptera punctata (Pacific beetle cockroach).